A 183-amino-acid chain; its full sequence is Capsid protein (183 aa).

The tract at residues 136–183 is disordered; the sequence is NAPILSTLPETTVVRRRGRSPRRRTPSPRRRRSQSPRRRRSQSPASQC. The segment covering 149-176 has biased composition (basic residues); it reads VRRRGRSPRRRTPSPRRRRSQSPRRRRS. Phosphoserine; by host is present on residues serine 155, serine 162, and serine 170. The stretch at 155–161 is one 1; half-length repeat; the sequence is SPRRRTP. Residues 155–177 form a 3 X 8 AA repeats of S-P-R-R-R-[PR]-S-Q region; sequence SPRRRTPSPRRRRSQSPRRRRSQ. The Bipartite nuclear localization signal motif lies at 158–175; it reads RRTPSPRRRRSQSPRRRR. 2 tandem repeats follow at residues 162–169 and 170–177. The tract at residues 177-183 is RNA binding; the sequence is QSPASQC.

This sequence belongs to the orthohepadnavirus core antigen family. In terms of assembly, homodimerizes, then multimerizes. Interacts with cytosol exposed regions of viral L glycoprotein present in the reticulum-to-Golgi compartment. Interacts with human FLNB. Phosphorylated form interacts with host importin alpha; this interaction depends on the exposure of the NLS, which itself depends upon genome maturation and/or phosphorylation of the capsid protein. Interacts with host NUP153. Phosphorylated by host SRPK1, SRPK2, and maybe protein kinase C or GAPDH. Phosphorylation is critical for pregenomic RNA packaging. Protein kinase C phosphorylation is stimulated by HBx protein and may play a role in transport of the viral genome to the nucleus at the late step during the viral replication cycle.

The protein resides in the virion. It is found in the host cytoplasm. Its function is as follows. Self assembles to form an icosahedral capsid. Most capsids appear to be large particles with an icosahedral symmetry of T=4 and consist of 240 copies of capsid protein, though a fraction forms smaller T=3 particles consisting of 180 capsid proteins. Entering capsids are transported along microtubules to the nucleus. Phosphorylation of the capsid is thought to induce exposure of nuclear localization signal in the C-terminal portion of the capsid protein that allows binding to the nuclear pore complex via the importin (karyopherin-) alpha and beta. Capsids are imported in intact form through the nuclear pore into the nuclear basket, where it probably binds NUP153. Only capsids that contain the mature viral genome can release the viral DNA and capsid protein into the nucleoplasm. Immature capsids get stuck in the basket. Capsids encapsulate the pre-genomic RNA and the P protein. Pre-genomic RNA is reverse-transcribed into DNA while the capsid is still in the cytoplasm. The capsid can then either be directed to the nucleus, providing more genomes for transcription, or bud through the endoplasmic reticulum to provide new virions. This Pan troglodytes (Chimpanzee) protein is Capsid protein.